The primary structure comprises 266 residues: Pre-mRNA-splicing factor CWC26 (266 aa).

Disordered stretches follow at residues 1–37 (MALH…DKTS) and 118–149 (TRKT…KYED). A compositionally biased stretch (basic residues) spans 16-26 (PKNKTKKKKKE). Residues 122 to 149 (IYRDAQGHKIQEDSKIDDSSFSRSKYED) are compositionally biased toward basic and acidic residues.

It belongs to the CWC26 family. Belongs to the pre-mRNA retention and splicing (RES) complex composed of at least BUD13, IST3 and PML1. May also belong to the CWC complex (or CEF1-associated complex) composed of the U2, U5 and U6 snRNAs and at least BUD13, BUD31, BRR2, CDC40, CEF1, CLF1, CUS1, CWC2, CWC15, CWC21, CWC22, CWC23, CWC24, CWC25, CWC27, ECM2, HSH155, IST3, ISY1, LEA1, MSL1, NTC20, PRP8, PRP9, PRP11, PRP19, PRP21, PRP22, PRP45, PRP46, SLU7, SMB1, SMD1, SMD2, SMD3, SMX2, SMX3, SNT309, SNU114, SPP2, SYF1, SYF2, RSE1 and YJU2. Interacts with IST3 and PML1.

Its subcellular location is the cytoplasm. The protein resides in the nucleus. Its function is as follows. Required for efficient splicing and pre-mRNA nuclear retention. May also be involved in positioning the proximal bud pole signal. The polypeptide is Pre-mRNA-splicing factor CWC26 (BUD13) (Saccharomyces cerevisiae (strain ATCC 204508 / S288c) (Baker's yeast)).